A 61-amino-acid polypeptide reads, in one-letter code: [Thr6]-bradykinyl-Val,Asp (61 aa).

The first 22 residues, 1–22, serve as a signal peptide directing secretion; it reads MSFLKKSLFLVLFLGLVSFSIC. Residues 23-50 constitute a propeptide that is removed on maturation; the sequence is EEEKRETEEEENEDEMDKESEEKRESPE. The interval 24-61 is disordered; sequence EEKRETEEEENEDEMDKESEEKRESPERPPGFTPFRVD. Residues 30-41 are compositionally biased toward acidic residues; that stretch reads EEEENEDEMDKE. A 4-hydroxyproline; in form [Hyp3,Thr6]-bradykinyl-Val,Asp and [Hyp3,Thr6]-bradykinin modification is found at P53.

This sequence belongs to the frog skin active peptide (FSAP) family. Bradykinin-related peptide subfamily. Expressed by the skin glands.

The protein localises to the secreted. Its function is as follows. Induces relaxation of rat smooth muscle from tail artery (EC(50)=16.8 nM) and contraction of that from ileum (EC(50)=205 nM), urinary bladder (EC(50)=895 nM) and uterus (EC(50)=60.3 nM). Binds to both bradykinin receptor B1 (BDKRB1) and B2 (BDKRB2). [Hyp3,Thr6]-bradykinin: Induces relaxation of rat smooth muscle from tail artery (EC(50)=56.7 nM) and contraction of that from ileum (EC(50)=588 nM), urinary bladder (EC(50)=4.6 uM) and uterus (EC(50)=3.9 nM). Binds to both bradykinin receptor B1 (BDKRB1) and B2 (BDKRB2). In arterial smooth muscle, the effect via BDKRB1 is stronger, in uterus, ileum and urinary bladder that via BDKRB2. Functionally, induces relaxation of rat smooth muscle from tail artery (EC(50)=10.8 nM) and contraction of that from ileum (EC(50)=645 nM), urinary bladder (EC(50)=1.1 uM) and uterus (EC(50)=1.2 uM). Binds to both bradykinin receptor B1 (BDKRB1) and B2 (BDKRB2). Apart from uterus smooth muscle, the effect via B2 is stronger. In terms of biological role, [Hyp3,Thr6]-bradykinyl-Val,Asp: Induces relaxation of rat smooth muscle from tail artery (EC(50)=3.5 nM) and contraction of that from ileum (EC(50)=223 nM), urinary bladder (EC(50)=1.5 uM) and uterus (EC(50)=356 nM). Binds to both bradykinin receptor B1 (BDKRB1) and B2 (BDKRB2); the effects via B2 a stronger. The chain is [Thr6]-bradykinyl-Val,Asp from Agalychnis callidryas (Red-eyed tree frog).